The chain runs to 436 residues: Aminopeptidase C (436 aa).

Active-site residues include Cys68, His356, and Asn378.

Belongs to the peptidase C1 family. In terms of assembly, homohexamer.

It carries out the reaction Inactivates bleomycin B2 (a cytotoxic glycometallopeptide) by hydrolysis of a carboxyamide bond of beta-aminoalanine, but also shows general aminopeptidase activity. The specificity varies somewhat with source, but amino acid arylamides of Met, Leu and Ala are preferred.. Functionally, hydrolyzes naphthylamide-substituted amino acids as well as di- and tripeptides in which the half-cystine residue is involved in a disulfide loop, notably in oxytocin and vasopressin. Also has a bleomycin hydrolase activity. This chain is Aminopeptidase C (pepC), found in Lactococcus lactis subsp. cremoris (Streptococcus cremoris).